We begin with the raw amino-acid sequence, 344 residues long: Large ribosomal subunit protein uL3 (344 aa).

The protein belongs to the universal ribosomal protein uL3 family. Part of the 50S ribosomal subunit. Forms a cluster with proteins L14 and L24e.

Functionally, one of the primary rRNA binding proteins, it binds directly near the 3'-end of the 23S rRNA, where it nucleates assembly of the 50S subunit. This chain is Large ribosomal subunit protein uL3, found in Aeropyrum pernix (strain ATCC 700893 / DSM 11879 / JCM 9820 / NBRC 100138 / K1).